The primary structure comprises 382 residues: PqqA peptide cyclase (382 aa).

The region spanning 8–223 is the Radical SAM core domain; it reads VKPPLWLLAE…VHRYREKMAA (216 aa). The [4Fe-4S] cluster site is built by C22, C26, and C29.

It belongs to the radical SAM superfamily. PqqE family. In terms of assembly, interacts with PqqD. The interaction is necessary for activity of PqqE. [4Fe-4S] cluster serves as cofactor.

The enzyme catalyses [PQQ precursor protein] + S-adenosyl-L-methionine = E-Y cross-linked-[PQQ precursor protein] + 5'-deoxyadenosine + L-methionine + H(+). The protein operates within cofactor biosynthesis; pyrroloquinoline quinone biosynthesis. Its function is as follows. Catalyzes the cross-linking of a glutamate residue and a tyrosine residue in the PqqA protein as part of the biosynthesis of pyrroloquinoline quinone (PQQ). This Erwinia tasmaniensis (strain DSM 17950 / CFBP 7177 / CIP 109463 / NCPPB 4357 / Et1/99) protein is PqqA peptide cyclase.